Here is a 373-residue protein sequence, read N- to C-terminus: 3 beta-hydroxysteroid dehydrogenase/Delta 5--&gt;4-isomerase type 2 (373 aa).

Tyr-155 (proton acceptor) is an active-site residue. An NAD(+)-binding site is contributed by Lys-159. A helical membrane pass occupies residues 288-308 (VPLLYWLAFLLETVSFLLSPI).

This sequence belongs to the 3-beta-HSD family. In terms of tissue distribution, liver and kidney.

Its subcellular location is the endoplasmic reticulum membrane. It localises to the mitochondrion membrane. It catalyses the reaction a 3beta-hydroxy-Delta(5)-steroid + NAD(+) = a 3-oxo-Delta(5)-steroid + NADH + H(+). The catalysed reaction is a 3-oxo-Delta(5)-steroid = a 3-oxo-Delta(4)-steroid. It carries out the reaction pregnenolone + NAD(+) = pregn-5-ene-3,20-dione + NADH + H(+). The enzyme catalyses pregn-5-ene-3,20-dione = progesterone. It catalyses the reaction 3beta-hydroxyandrost-5-en-17-one + NAD(+) = androst-5-ene-3,17-dione + NADH + H(+). The catalysed reaction is androst-5-ene-3,17-dione = androst-4-ene-3,17-dione. The protein operates within lipid metabolism; steroid biosynthesis. 3-beta-HSD is a bifunctional enzyme, that catalyzes the oxidative conversion of Delta(5)-ene-3-beta-hydroxy steroid, and the oxidative conversion of ketosteroids. The 3-beta-HSD enzymatic system plays a crucial role in the biosynthesis of all classes of hormonal steroids. The protein is 3 beta-hydroxysteroid dehydrogenase/Delta 5--&gt;4-isomerase type 2 of Mus musculus (Mouse).